Here is a 1038-residue protein sequence, read N- to C-terminus: Subtilisin-like protease SBT6.1 (1038 aa).

A signal peptide spans 1–30 (MKVLGEASSYPYRSCIIVVFLSVSLFWLRP). The propeptide at 31–181 (STYHPQQQNL…TTLNWSRHLL (151 aa)) is removed in mature form. N-linked (GlcNAc...) asparagine glycosylation is found at Asn-44, Asn-52, Asn-171, and Asn-175. The Peptidase S8 domain maps to 175–473 (NWSRHLLAQK…VDLLESYEIL (299 aa)). At 182 to 1000 (AQKTQVTSMF…IDMPFLVPTR (819 aa)) the chain is on the lumenal side. Asp-212 (charge relay system) is an active-site residue. Asn-230 is a glycosylation site (N-linked (GlcNAc...) asparagine). His-243 functions as the Charge relay system in the catalytic mechanism. Residue Asn-300 is glycosylated (N-linked (GlcNAc...) asparagine). The active-site Charge relay system is Ser-409. Residues Asn-513, Asn-579, Asn-902, and Asn-954 are each glycosylated (N-linked (GlcNAc...) asparagine). A helical transmembrane segment spans residues 1001–1021 (WIVLAGVVASGVLVLLSIWRI). Residues 1022 to 1038 (RQKRGRRRRASGSNRLA) lie on the Cytoplasmic side of the membrane.

This sequence belongs to the peptidase S8 family. As to quaternary structure, interacts with PME1 and PME5. In terms of tissue distribution, expressed in the vasculature of roots, cotyledons and leaves.

It localises to the golgi apparatus membrane. Functionally, serine protease that catalyzes the first step (site-1 cleavage) in the proteolytic activation of various factors, prior to site-2 cleavage. Part of a regulated intramembrane proteolysis (RIP) cascade. Cleaves BZIP17 and BZIP28 after the Arg-Arg-Ile-Leu (RRIL) motif. May cleave BZIP49 after the RRIL motif. Targets the membrane-associated BZIP17 factor, which functions as a stress sensor and transducer in a signaling pathway that resembles an ER stress response. Following salt stress, BZIP17 is cleaved by SBT6.1 (S1P) and S2P at the C-terminus and the N-terminal bZIP component is translocated to the nucleus, where it activates the expression of salt stress response genes. Cleaves the pectinesterases PME1 after the Arg-Arg-Leu-Met (RRLM) and Arg-Arg-Leu-Leu (RRLL) motifs, and PME5 after the Arg-Arg-Leu-Leu (RRLL) and Arg-Lys-Leu-Met (RKLM) motifs. This processing and C-terminus release occurs in the Golgi apparatus and is required for cell wall targeting of pectinesterases. Thus, SBT6.1 mediates the regulated release of mature pectinesterases from the Golgi. Cleaves the peptide growth factor RALF23 after the Arg-Arg-Ile-Leu (RRIL) motif. This processing is required for RALF23 function in the negative regulation of brassinolide (BL)-mediated signaling pathway (e.g. BL-induced hypocotyl elongation and branching limitation). The polypeptide is Subtilisin-like protease SBT6.1 (Arabidopsis thaliana (Mouse-ear cress)).